The chain runs to 556 residues: Secreted RxLR effector protein 114 (556 aa).

Residues 1–19 form the signal peptide; sequence MCGAHFVAIALLVAAGCQT. Disordered stretches follow at residues 43-76, 108-138, and 389-408; these read LQSR…GVLK, NQLK…DSDK, and NDKS…EDWN. The RxLR-dEER motif lies at 46–66; the sequence is RNLRESRDSKDDLLSAGDEER. Residues 47-67 show a composition bias toward basic and acidic residues; that stretch reads NLRESRDSKDDLLSAGDEERT.

The protein belongs to the RxLR effector family.

It localises to the secreted. Its subcellular location is the host cell. Functionally, secreted effector that partially suppresses the host cell death induced by cell death-inducing proteins. The polypeptide is Secreted RxLR effector protein 114 (Plasmopara viticola (Downy mildew of grapevine)).